Here is a 521-residue protein sequence, read N- to C-terminus: GMP synthase [glutamine-hydrolyzing] (521 aa).

The Glutamine amidotransferase type-1 domain maps to 8-203 (KILILDFGAQ…VVDICGCQTL (196 aa)). The active-site Nucleophile is the Cys85. Catalysis depends on residues His177 and Glu179. The GMPS ATP-PPase domain maps to 204–396 (WTAANIIDDQ…LGLPRTMVYR (193 aa)). Residue 231–237 (SGGVDSS) participates in ATP binding.

In terms of assembly, homodimer.

The catalysed reaction is XMP + L-glutamine + ATP + H2O = GMP + L-glutamate + AMP + diphosphate + 2 H(+). It participates in purine metabolism; GMP biosynthesis; GMP from XMP (L-Gln route): step 1/1. Functionally, catalyzes the synthesis of GMP from XMP. The polypeptide is GMP synthase [glutamine-hydrolyzing] (Xanthomonas oryzae pv. oryzae (strain PXO99A)).